Consider the following 739-residue polypeptide: DNA ligase (739 aa).

The interval 1–29 (MTANRPALPTRDKAVSDLSATEASDEHAA) is disordered. Residues 51–55 (DADYD), 100–101 (SL), and glutamate 134 contribute to the NAD(+) site. The N6-AMP-lysine intermediate role is filled by lysine 136. Residues arginine 157, glutamate 194, lysine 311, and lysine 335 each coordinate NAD(+). 4 residues coordinate Zn(2+): cysteine 440, cysteine 443, cysteine 464, and cysteine 470. Residues 592-612 (PTEMEEASEETPPTRRRKPQG) form a disordered region. Positions 662-739 (ASTSPVSGKT…TEDEWFDLVG (78 aa)) constitute a BRCT domain.

This sequence belongs to the NAD-dependent DNA ligase family. LigA subfamily. Mg(2+) is required as a cofactor. It depends on Mn(2+) as a cofactor.

It catalyses the reaction NAD(+) + (deoxyribonucleotide)n-3'-hydroxyl + 5'-phospho-(deoxyribonucleotide)m = (deoxyribonucleotide)n+m + AMP + beta-nicotinamide D-nucleotide.. Functionally, DNA ligase that catalyzes the formation of phosphodiester linkages between 5'-phosphoryl and 3'-hydroxyl groups in double-stranded DNA using NAD as a coenzyme and as the energy source for the reaction. It is essential for DNA replication and repair of damaged DNA. In Azorhizobium caulinodans (strain ATCC 43989 / DSM 5975 / JCM 20966 / LMG 6465 / NBRC 14845 / NCIMB 13405 / ORS 571), this protein is DNA ligase.